Here is a 287-residue protein sequence, read N- to C-terminus: S-methyl-5'-thioadenosine phosphorylase (287 aa).

Phosphate contacts are provided by residues threonine 13 and 55 to 56; that span reads RH. Methionine 186 is a substrate binding site. A phosphate-binding site is contributed by threonine 187. A substrate-binding site is contributed by 210–212; that stretch reads DYD.

The protein belongs to the PNP/MTAP phosphorylase family. MTAP subfamily. As to quaternary structure, homohexamer. Dimer of a homotrimer.

The catalysed reaction is S-methyl-5'-thioadenosine + phosphate = 5-(methylsulfanyl)-alpha-D-ribose 1-phosphate + adenine. The protein operates within amino-acid biosynthesis; L-methionine biosynthesis via salvage pathway; S-methyl-5-thio-alpha-D-ribose 1-phosphate from S-methyl-5'-thioadenosine (phosphorylase route): step 1/1. Its function is as follows. Catalyzes the reversible phosphorylation of S-methyl-5'-thioadenosine (MTA) to adenine and 5-methylthioribose-1-phosphate. Involved in the breakdown of MTA, a major by-product of polyamine biosynthesis. Responsible for the first step in the methionine salvage pathway after MTA has been generated from S-adenosylmethionine. Has broad substrate specificity with 6-aminopurine nucleosides as preferred substrates. The protein is S-methyl-5'-thioadenosine phosphorylase of Leptospira interrogans serogroup Icterohaemorrhagiae serovar copenhageni (strain Fiocruz L1-130).